A 320-amino-acid polypeptide reads, in one-letter code: Malate dehydrogenase (320 aa).

Residues 10-15 and aspartate 34 contribute to the NAD(+) site; that span reads GAGQIG. Positions 83 and 89 each coordinate substrate. NAD(+)-binding positions include asparagine 96 and 119–121; that span reads ITN. Substrate is bound by residues asparagine 121 and arginine 152. Catalysis depends on histidine 176, which acts as the Proton acceptor.

This sequence belongs to the LDH/MDH superfamily. MDH type 3 family.

It carries out the reaction (S)-malate + NAD(+) = oxaloacetate + NADH + H(+). In terms of biological role, catalyzes the reversible oxidation of malate to oxaloacetate. In Beijerinckia indica subsp. indica (strain ATCC 9039 / DSM 1715 / NCIMB 8712), this protein is Malate dehydrogenase.